Here is a 316-residue protein sequence, read N- to C-terminus: Low affinity immunoglobulin gamma Fc region receptor II-a (316 aa).

Residues 1–35 form the signal peptide; that stretch reads MAMETQMSQNVCPRNLWLLQPLTVLLLLASADSQA. Topologically, residues 36–216 are extracellular; that stretch reads APPKAVLKLE…PSVGSSSPVG (181 aa). Ig-like C2-type domains follow at residues 38 to 117 and 121 to 203; these read PKAV…VHLT and EWLV…VTIT. Disulfide bonds link Cys61-Cys103 and Cys142-Cys186. N-linked (GlcNAc...) asparagine glycosylation is found at Asn96, Asn170, and Asn177. A helical transmembrane segment spans residues 217–239; the sequence is IIVAVVIATAVAAIVAAVVALIY. The Cytoplasmic portion of the chain corresponds to 240-316; the sequence is CRKKRISANS…PPNDHVNSNN (77 aa). Phosphotyrosine; by SRC-type Tyr-kinases occurs at positions 287 and 303.

As to quaternary structure, interacts with INPP5D/SHIP1 and INPPL1/SHIP2, regulating its function. Interacts with APCS and FGR. Interacts with HCK. In terms of processing, phosphorylated by SRC-type Tyr-kinases such as HCK, LYN, BLK, FYN and SYK.

Its subcellular location is the cell membrane. In terms of biological role, binds to the Fc region of immunoglobulins gamma. Low affinity receptor. By binding to IgG it initiates cellular responses against pathogens and soluble antigens. Promotes phagocytosis of opsonized antigens. In Pan troglodytes (Chimpanzee), this protein is Low affinity immunoglobulin gamma Fc region receptor II-a (FCGR2A).